Reading from the N-terminus, the 437-residue chain is Trigger factor (437 aa).

Positions 164 to 249 constitute a PPIase FKBP-type domain; it reads GDRVTIDFAG…LKSVEAPKLP (86 aa).

This sequence belongs to the FKBP-type PPIase family. Tig subfamily.

The protein resides in the cytoplasm. It carries out the reaction [protein]-peptidylproline (omega=180) = [protein]-peptidylproline (omega=0). In terms of biological role, involved in protein export. Acts as a chaperone by maintaining the newly synthesized protein in an open conformation. Functions as a peptidyl-prolyl cis-trans isomerase. The protein is Trigger factor of Azoarcus sp. (strain BH72).